Consider the following 408-residue polypeptide: 1-deoxy-D-xylulose 5-phosphate reductoisomerase (408 aa).

NADPH contacts are provided by T19, G20, S21, I22, G45, N47, and N130. K131 is a 1-deoxy-D-xylulose 5-phosphate binding site. Position 132 (E132) interacts with NADPH. D156 contacts Mn(2+). 1-deoxy-D-xylulose 5-phosphate is bound by residues S157, E158, S182, and H205. E158 is a binding site for Mn(2+). G211 provides a ligand contact to NADPH. S218, N223, K224, and E227 together coordinate 1-deoxy-D-xylulose 5-phosphate. E227 lines the Mn(2+) pocket.

Belongs to the DXR family. Requires Mg(2+) as cofactor. The cofactor is Mn(2+).

It catalyses the reaction 2-C-methyl-D-erythritol 4-phosphate + NADP(+) = 1-deoxy-D-xylulose 5-phosphate + NADPH + H(+). It participates in isoprenoid biosynthesis; isopentenyl diphosphate biosynthesis via DXP pathway; isopentenyl diphosphate from 1-deoxy-D-xylulose 5-phosphate: step 1/6. Catalyzes the NADPH-dependent rearrangement and reduction of 1-deoxy-D-xylulose-5-phosphate (DXP) to 2-C-methyl-D-erythritol 4-phosphate (MEP). The protein is 1-deoxy-D-xylulose 5-phosphate reductoisomerase of Gluconobacter oxydans (strain 621H) (Gluconobacter suboxydans).